Here is a 244-residue protein sequence, read N- to C-terminus: 2-C-methyl-D-erythritol 4-phosphate cytidylyltransferase (244 aa).

Belongs to the IspD/TarI cytidylyltransferase family. IspD subfamily.

The enzyme catalyses 2-C-methyl-D-erythritol 4-phosphate + CTP + H(+) = 4-CDP-2-C-methyl-D-erythritol + diphosphate. It participates in isoprenoid biosynthesis; isopentenyl diphosphate biosynthesis via DXP pathway; isopentenyl diphosphate from 1-deoxy-D-xylulose 5-phosphate: step 2/6. Functionally, catalyzes the formation of 4-diphosphocytidyl-2-C-methyl-D-erythritol from CTP and 2-C-methyl-D-erythritol 4-phosphate (MEP). In Prosthecochloris aestuarii (strain DSM 271 / SK 413), this protein is 2-C-methyl-D-erythritol 4-phosphate cytidylyltransferase.